Consider the following 406-residue polypeptide: Homocitrate synthase AksA (406 aa).

The Pyruvate carboxyltransferase domain occupies 32–285 (IYIYDTTLRD…DLGLNLEVLP (254 aa)).

It belongs to the alpha-IPM synthase/homocitrate synthase family.

It carries out the reaction acetyl-CoA + 2-oxoglutarate + H2O = (2R)-homocitrate + CoA + H(+). The catalysed reaction is 2-oxoadipate + acetyl-CoA + H2O = (R)-dihomocitrate + CoA + H(+). The enzyme catalyses 2-oxoheptanedioate + acetyl-CoA + H2O = (R)-trihomocitrate + CoA + H(+). It functions in the pathway organic acid metabolism; 2-oxosuberate biosynthesis. Its function is as follows. Catalyzes the condensation of alpha-ketoglutarate and acetyl-CoA to form (R)-homocitrate. Can also catalyze the condensation of alpha-ketoadipate with acetyl-CoA to form (R)-homo(2)citrate, and the condensation of alpha-ketopimelate with acetyl-CoA to form (R)-homo(3)citrate. These reactions are part of the biosynthesis pathway of coenzyme B and biotin. This Methanocaldococcus jannaschii (strain ATCC 43067 / DSM 2661 / JAL-1 / JCM 10045 / NBRC 100440) (Methanococcus jannaschii) protein is Homocitrate synthase AksA (aksA).